The sequence spans 59 residues: DNA-directed RNA polymerase subunit Rpo6 (59 aa).

It belongs to the archaeal Rpo6/eukaryotic RPB6 RNA polymerase subunit family. Part of the RNA polymerase complex.

Its subcellular location is the cytoplasm. The catalysed reaction is RNA(n) + a ribonucleoside 5'-triphosphate = RNA(n+1) + diphosphate. In terms of biological role, DNA-dependent RNA polymerase (RNAP) catalyzes the transcription of DNA into RNA using the four ribonucleoside triphosphates as substrates. In Halorubrum lacusprofundi (strain ATCC 49239 / DSM 5036 / JCM 8891 / ACAM 34), this protein is DNA-directed RNA polymerase subunit Rpo6.